The primary structure comprises 1066 residues: FHIP family protein GI14169 (1066 aa).

Residues 1 to 11 show a composition bias toward polar residues; sequence MSWLRTSPLRQ. Residues 1 to 35 are disordered; the sequence is MSWLRTSPLRQSLTRSGSSSGNGSSGTATTMRQRP. Positions 12–30 are enriched in low complexity; it reads SLTRSGSSSGNGSSGTATT. S500 carries the phosphoserine modification. Residues 651–682 are disordered; it reads GIDVTTTTTASASDTDLEHNNNSSSISSGRRD. Residues 655–678 are compositionally biased toward low complexity; the sequence is TTTTTASASDTDLEHNNNSSSISS. The residue at position 820 (S820) is a Phosphoserine. Disordered regions lie at residues 821–913 and 935–1007; these read PLHQ…GNSA and SGGE…TGNF. Positions 822 to 855 are enriched in low complexity; that stretch reads LHQQLQHQQQHQQLAQTNSHTQQQQQQQQQQAQQ. Over residues 856–874 the composition is skewed to polar residues; that stretch reads RSTYATLSAATPVQASPTS. Residues 890 to 913 show a composition bias toward low complexity; sequence SRSITSMFSRRSTSSTPASNGNSA. Residues 947 to 971 are compositionally biased toward polar residues; the sequence is QDSTRGNTCETSLSTAPRQEPQTNV. The span at 972–997 shows a compositional bias: low complexity; the sequence is GSSSNSSIGSSTQTLSGTHSSSTLHG.

The protein belongs to the FHIP family.

The protein is FHIP family protein GI14169 of Drosophila mojavensis (Fruit fly).